A 222-amino-acid chain; its full sequence is Uridine diphosphate glucose pyrophosphatase NUDT14 (222 aa).

The Nudix hydrolase domain maps to K38 to F206. Positions P111–Y129 match the Nudix box motif.

Belongs to the Nudix hydrolase family. Homodimer. Mg(2+) is required as a cofactor.

The protein localises to the cytoplasm. It carries out the reaction UDP-sugar + H2O = UMP + alpha-D-aldose 1-phosphate.. Functionally, hydrolyzes UDP-glucose to glucose 1-phosphate and UMP and ADP-ribose to ribose 5-phosphate and AMP. The physiological substrate is probably UDP-glucose. Poor activity on other substrates such as ADP-glucose, CDP-glucose, GDP-glucose and GDP-mannose. The polypeptide is Uridine diphosphate glucose pyrophosphatase NUDT14 (NUDT14) (Bos taurus (Bovine)).